We begin with the raw amino-acid sequence, 442 residues long: MQPPPSLCGRALVALVLACGLSRIWGEERGFPPDRATPLLQTAEIMTPPTKTLWPKGSNASLARSLAPAEVPKGDRTAGSPPRTISPPPCQGPIEIKETFKYINTVVSCLVFVLGIIGNSTLLRIIYKNKCMRNGPNILIASLALGDLLHIVIDIPINVYKLLAEDWPFGAEMCKLVPFIQKASVGITVLSLCALSIDRYRAVASWSRIKGIGVPKWTAVEIVLIWVVSVVLAVPEAIGFDIITMDYKGSYLRICLLHPVQKTAFMQFYKTAKDWWLFSFYFCLPLAITAFFYTLMTCEMLRKKSGMQIALNDHLKQRREVAKTVFCLVLVFALCWLPLHLSRILKLTLYNQNDPNRCELLSFLLVLDYIGINMASLNSCINPIALYLVSKRFKNCFKSCLCCWCQSFEEKQSLEEKQSCLKFKANDHGYDNFRSSNKYSSS.

Residues 1-26 (MQPPPSLCGRALVALVLACGLSRIWG) form the signal peptide. Topologically, residues 27 to 101 (EERGFPPDRA…GPIEIKETFK (75 aa)) are extracellular. Asparagine 59 carries an N-linked (GlcNAc...) asparagine glycan. Residues 69–88 (AEVPKGDRTAGSPPRTISPP) are disordered. The helical transmembrane segment at 102 to 126 (YINTVVSCLVFVLGIIGNSTLLRII) threads the bilayer. At 127-137 (YKNKCMRNGPN) the chain is on the cytoplasmic side. A helical membrane pass occupies residues 138 to 163 (ILIASLALGDLLHIVIDIPINVYKLL). Topologically, residues 164-175 (AEDWPFGAEMCK) are extracellular. Cysteine 174 and cysteine 255 are joined by a disulfide. The helical transmembrane segment at 176 to 197 (LVPFIQKASVGITVLSLCALSI) threads the bilayer. The Cytoplasmic segment spans residues 198 to 218 (DRYRAVASWSRIKGIGVPKWT). The helical transmembrane segment at 219–243 (AVEIVLIWVVSVVLAVPEAIGFDII) threads the bilayer. Topologically, residues 244-271 (TMDYKGSYLRICLLHPVQKTAFMQFYKT) are extracellular. A helical membrane pass occupies residues 272 to 296 (AKDWWLFSFYFCLPLAITAFFYTLM). Topologically, residues 297 to 324 (TCEMLRKKSGMQIALNDHLKQRREVAKT) are cytoplasmic. A Phosphoserine modification is found at serine 305. Residues 325-350 (VFCLVLVFALCWLPLHLSRILKLTLY) traverse the membrane as a helical segment. At 351 to 362 (NQNDPNRCELLS) the chain is on the extracellular side. A helical transmembrane segment spans residues 363–389 (FLLVLDYIGINMASLNSCINPIALYLV). Residues 390-442 (SKRFKNCFKSCLCCWCQSFEEKQSLEEKQSCLKFKANDHGYDNFRSSNKYSSS) are Cytoplasmic-facing. 3 S-palmitoyl cysteine lipidation sites follow: cysteine 402, cysteine 403, and cysteine 405. Phosphoserine is present on serine 419. Tyrosine 439 is modified (phosphotyrosine). 3 positions are modified to phosphoserine: serine 440, serine 441, and serine 442.

This sequence belongs to the G-protein coupled receptor 1 family. Endothelin receptor subfamily. EDNRB sub-subfamily. Post-translationally, palmitoylation of Cys-402 was confirmed by the palmitoylation of Cys-402 in a deletion mutant lacking both Cys-403 and Cys-405. In terms of tissue distribution, expressed in placental stem villi vessels, but not in cultured placental villi smooth muscle cells.

It localises to the cell membrane. Functionally, non-specific receptor for endothelin 1, 2, and 3. Mediates its action by association with G proteins that activate a phosphatidylinositol-calcium second messenger system. The sequence is that of Endothelin receptor type B from Homo sapiens (Human).